A 1430-amino-acid chain; its full sequence is Gag-Pol polyprotein (1430 aa).

Residue Gly2 is the site of N-myristoyl glycine; by host attachment. Residues 7–31 are interaction with Gp41; the sequence is ILSGGKLDEWEKIQLRPGGKKRYKM. The tract at residues 8 to 43 is interaction with host CALM1; it reads LSGGKLDEWEKIQLRPGGKKRYKMKHLIWASRELER. The segment at 12–19 is interaction with host AP3D1; that stretch reads KLDEWEKI. Residues 14-33 are interaction with membrane phosphatidylinositol 4,5-bisphosphate and RNA; it reads DEWEKIQLRPGGKKRYKMKH. The short motif at 16–22 is the Nuclear export signal element; sequence WEKIQLR. The Nuclear localization signal motif lies at 26 to 32; that stretch reads KKRYKMK. The segment at 73–77 is interaction with membrane phosphatidylinositol 4,5-bisphosphate; that stretch reads EELKS. Position 128 is a phosphotyrosine; by host (Tyr128). The interaction with human PPIA/CYPA and NUP153 stretch occupies residues 185–223; sequence NTVGGHQAAMQMLKDTINEEAAEWDRLHPVHAGPAPPGQ. Positions 273-359 are dimerization/Multimerization of capsid protein p24; that stretch reads YSPVSILDIK…GGPSHKARVL (87 aa). CCHC-type zinc fingers lie at residues 384–401 and 405–422; these read VKCF…NCRA and KGCW…DCTE. Positions 438 to 475 are disordered; that stretch reads EARKFPSEQTRANSPTSRELRVQRGDNPLSEAGAERRG. The segment covering 444 to 454 has biased composition (polar residues); the sequence is SEQTRANSPTS. Residues 483–487 are dimerization of protease; it reads PQITL. In terms of domain architecture, Peptidase A2 spans 502–571; sequence KEALLDTGAD…TPVNIIGRNM (70 aa). Asp507 acts as the For protease activity; shared with dimeric partner in catalysis. 2 dimerization of protease regions span residues 531-537 and 570-582; these read GIGGFIK and NMLT…LNFP. Positions 625–815 constitute a Reverse transcriptase domain; the sequence is EGKISKIGPE…PPFLWMGHEL (191 aa). Residues Asp691, Asp766, and Asp767 each contribute to the Mg(2+) site. An RT 'primer grip' region spans residues 808–816; sequence FLWMGHELH. The short motif at 980–996 is the Tryptophan repeat motif element; the sequence is WDTWWTDYWQATWIPEW. Residues 1016–1139 enclose the RNase H type-1 domain; it reads IAGADTFYVD…VDKLVSAGVR (124 aa). Residues Asp1025, Glu1060, Asp1080, and Asp1131 each contribute to the Mg(2+) site. Residues 1145–1186 form an Integrase-type zinc finger; the sequence is DGIDKAQEEHEKYHNNWRAMASDFNLPPIVAKEIVASCDKCQ. Positions 1154, 1158, 1182, and 1185 each coordinate Zn(2+). One can recognise an Integrase catalytic domain in the interval 1196 to 1346; sequence VDCSPGIWQL…SAGERIIDII (151 aa). The Mg(2+) site is built by Asp1206, Asp1258, and Glu1294. Residues 1365–1412 constitute a DNA-binding region (integrase-type); the sequence is FRVYYRDSRNPVWKGPAKLLWKGEGAVVIQDNSEIKIVPRRKAKIIRD.

Homotrimer; further assembles as hexamers of trimers. Interacts with gp41 (via C-terminus). Interacts with host CALM1; this interaction induces a conformational change in the Matrix protein, triggering exposure of the myristate group. Interacts with host AP3D1; this interaction allows the polyprotein trafficking to multivesicular bodies during virus assembly. Part of the pre-integration complex (PIC) which is composed of viral genome, matrix protein, Vpr and integrase. As to quaternary structure, homodimer; the homodimer further multimerizes as homohexamers or homopentamers. Interacts with human PPIA/CYPA; This interaction stabilizes the capsid. Interacts with human NUP153. Interacts with host PDZD8; this interaction stabilizes the capsid. Interacts with monkey TRIM5; this interaction destabilizes the capsid. In terms of assembly, homodimer, whose active site consists of two apposed aspartic acid residues. Heterodimer of p66 RT and p51 RT (RT p66/p51). Heterodimerization of RT is essential for DNA polymerase activity. The overall folding of the subdomains is similar in p66 RT and p51 RT but the spatial arrangements of the subdomains are dramatically different. As to quaternary structure, homotetramer; may further associate as a homohexadecamer. Part of the pre-integration complex (PIC) which is composed of viral genome, matrix protein, Vpr and integrase. Interacts with human SMARCB1/INI1 and human PSIP1/LEDGF isoform 1. Interacts with human KPNA3; this interaction might play a role in nuclear import of the pre-integration complex. Interacts with human NUP153; this interaction might play a role in nuclear import of the pre-integration complex. Mg(2+) is required as a cofactor. Post-translationally, specific enzymatic cleavages by the viral protease yield mature proteins. The protease is released by autocatalytic cleavage. The polyprotein is cleaved during and after budding, this process is termed maturation. Proteolytic cleavage of p66 RT removes the RNase H domain to yield the p51 RT subunit. Nucleocapsid protein p7 might be further cleaved after virus entry. Tyrosine phosphorylated presumably in the virion by a host kinase. Phosphorylation is apparently not a major regulator of membrane association. In terms of processing, phosphorylated possibly by host MAPK1; this phosphorylation is necessary for Pin1-mediated virion uncoating. Post-translationally, methylated by host PRMT6, impairing its function by reducing RNA annealing and the initiation of reverse transcription.

The protein resides in the host cell membrane. Its subcellular location is the host endosome. It localises to the host multivesicular body. It is found in the virion membrane. The protein localises to the host nucleus. The protein resides in the host cytoplasm. Its subcellular location is the virion. The enzyme catalyses Specific for a P1 residue that is hydrophobic, and P1' variable, but often Pro.. The catalysed reaction is Endohydrolysis of RNA in RNA/DNA hybrids. Three different cleavage modes: 1. sequence-specific internal cleavage of RNA. Human immunodeficiency virus type 1 and Moloney murine leukemia virus enzymes prefer to cleave the RNA strand one nucleotide away from the RNA-DNA junction. 2. RNA 5'-end directed cleavage 13-19 nucleotides from the RNA end. 3. DNA 3'-end directed cleavage 15-20 nucleotides away from the primer terminus.. It carries out the reaction 3'-end directed exonucleolytic cleavage of viral RNA-DNA hybrid.. It catalyses the reaction DNA(n) + a 2'-deoxyribonucleoside 5'-triphosphate = DNA(n+1) + diphosphate. With respect to regulation, protease: The viral protease is inhibited by many synthetic protease inhibitors (PIs), such as amprenavir, atazanavir, indinavir, loprinavir, nelfinavir, ritonavir and saquinavir. Use of protease inhibitors in tritherapy regimens permit more ambitious therapeutic strategies. Reverse transcriptase/ribonuclease H: RT can be inhibited either by nucleoside RT inhibitors (NRTIs) or by non nucleoside RT inhibitors (NNRTIs). NRTIs act as chain terminators, whereas NNRTIs inhibit DNA polymerization by binding a small hydrophobic pocket near the RT active site and inducing an allosteric change in this region. Classical NRTIs are abacavir, adefovir (PMEA), didanosine (ddI), lamivudine (3TC), stavudine (d4T), tenofovir (PMPA), zalcitabine (ddC), and zidovudine (AZT). Classical NNRTIs are atevirdine (BHAP U-87201E), delavirdine, efavirenz (DMP-266), emivirine (I-EBU), and nevirapine (BI-RG-587). The tritherapies used as a basic effective treatment of AIDS associate two NRTIs and one NNRTI. Its function is as follows. Mediates, with Gag polyprotein, the essential events in virion assembly, including binding the plasma membrane, making the protein-protein interactions necessary to create spherical particles, recruiting the viral Env proteins, and packaging the genomic RNA via direct interactions with the RNA packaging sequence (Psi). Gag-Pol polyprotein may regulate its own translation, by the binding genomic RNA in the 5'-UTR. At low concentration, the polyprotein would promote translation, whereas at high concentration, the polyprotein would encapsidate genomic RNA and then shut off translation. In terms of biological role, targets the polyprotein to the plasma membrane via a multipartite membrane-binding signal, that includes its myristoylated N-terminus. Matrix protein is part of the pre-integration complex. Implicated in the release from host cell mediated by Vpu. Binds to RNA. Forms the conical core that encapsulates the genomic RNA-nucleocapsid complex in the virion. Most core are conical, with only 7% tubular. The core is constituted by capsid protein hexamer subunits. The core is disassembled soon after virion entry. Host restriction factors such as TRIM5-alpha or TRIMCyp bind retroviral capsids and cause premature capsid disassembly, leading to blocks in reverse transcription. Capsid restriction by TRIM5 is one of the factors which restricts HIV-1 to the human species. Host PIN1 apparently facilitates the virion uncoating. On the other hand, interactions with PDZD8 or CYPA stabilize the capsid. Functionally, encapsulates and protects viral dimeric unspliced genomic RNA (gRNA). Binds these RNAs through its zinc fingers. Acts as a nucleic acid chaperone which is involved in rearangement of nucleic acid secondary structure during gRNA retrotranscription. Also facilitates template switch leading to recombination. As part of the polyprotein, participates in gRNA dimerization, packaging, tRNA incorporation and virion assembly. Its function is as follows. Aspartyl protease that mediates proteolytic cleavages of Gag and Gag-Pol polyproteins during or shortly after the release of the virion from the plasma membrane. Cleavages take place as an ordered, step-wise cascade to yield mature proteins. This process is called maturation. Displays maximal activity during the budding process just prior to particle release from the cell. Also cleaves Nef and Vif, probably concomitantly with viral structural proteins on maturation of virus particles. Hydrolyzes host EIF4GI and PABP1 in order to shut off the capped cellular mRNA translation. The resulting inhibition of cellular protein synthesis serves to ensure maximal viral gene expression and to evade host immune response. Also mediates cleavage of host YTHDF3. Mediates cleavage of host CARD8, thereby activating the CARD8 inflammasome, leading to the clearance of latent HIV-1 in patient CD4(+) T-cells after viral reactivation; in contrast, HIV-1 can evade CARD8-sensing when its protease remains inactive in infected cells prior to viral budding. In terms of biological role, multifunctional enzyme that converts the viral RNA genome into dsDNA in the cytoplasm, shortly after virus entry into the cell. This enzyme displays a DNA polymerase activity that can copy either DNA or RNA templates, and a ribonuclease H (RNase H) activity that cleaves the RNA strand of RNA-DNA heteroduplexes in a partially processive 3' to 5' endonucleasic mode. Conversion of viral genomic RNA into dsDNA requires many steps. A tRNA(3)-Lys binds to the primer-binding site (PBS) situated at the 5'-end of the viral RNA. RT uses the 3' end of the tRNA primer to perform a short round of RNA-dependent minus-strand DNA synthesis. The reading proceeds through the U5 region and ends after the repeated (R) region which is present at both ends of viral RNA. The portion of the RNA-DNA heteroduplex is digested by the RNase H, resulting in a ssDNA product attached to the tRNA primer. This ssDNA/tRNA hybridizes with the identical R region situated at the 3' end of viral RNA. This template exchange, known as minus-strand DNA strong stop transfer, can be either intra- or intermolecular. RT uses the 3' end of this newly synthesized short ssDNA to perform the RNA-dependent minus-strand DNA synthesis of the whole template. RNase H digests the RNA template except for two polypurine tracts (PPTs) situated at the 5'-end and near the center of the genome. It is not clear if both polymerase and RNase H activities are simultaneous. RNase H probably can proceed both in a polymerase-dependent (RNA cut into small fragments by the same RT performing DNA synthesis) and a polymerase-independent mode (cleavage of remaining RNA fragments by free RTs). Secondly, RT performs DNA-directed plus-strand DNA synthesis using the PPTs that have not been removed by RNase H as primers. PPTs and tRNA primers are then removed by RNase H. The 3' and 5' ssDNA PBS regions hybridize to form a circular dsDNA intermediate. Strand displacement synthesis by RT to the PBS and PPT ends produces a blunt ended, linear dsDNA copy of the viral genome that includes long terminal repeats (LTRs) at both ends. Catalyzes viral DNA integration into the host chromosome, by performing a series of DNA cutting and joining reactions. This enzyme activity takes place after virion entry into a cell and reverse transcription of the RNA genome in dsDNA. The first step in the integration process is 3' processing. This step requires a complex comprising the viral genome, matrix protein, Vpr and integrase. This complex is called the pre-integration complex (PIC). The integrase protein removes 2 nucleotides from each 3' end of the viral DNA, leaving recessed CA OH's at the 3' ends. In the second step, the PIC enters cell nucleus. This process is mediated through integrase and Vpr proteins, and allows the virus to infect a non dividing cell. This ability to enter the nucleus is specific of lentiviruses, other retroviruses cannot and rely on cell division to access cell chromosomes. In the third step, termed strand transfer, the integrase protein joins the previously processed 3' ends to the 5' ends of strands of target cellular DNA at the site of integration. The 5'-ends are produced by integrase-catalyzed staggered cuts, 5 bp apart. A Y-shaped, gapped, recombination intermediate results, with the 5'-ends of the viral DNA strands and the 3' ends of target DNA strands remaining unjoined, flanking a gap of 5 bp. The last step is viral DNA integration into host chromosome. This involves host DNA repair synthesis in which the 5 bp gaps between the unjoined strands are filled in and then ligated. Since this process occurs at both cuts flanking the HIV genome, a 5 bp duplication of host DNA is produced at the ends of HIV-1 integration. Alternatively, Integrase may catalyze the excision of viral DNA just after strand transfer, this is termed disintegration. In Homo sapiens (Human), this protein is Gag-Pol polyprotein (gag-pol).